The following is a 261-amino-acid chain: Cytochrome c oxidase subunit 3 (261 aa).

The Mitochondrial matrix segment spans residues Met1–Pro15. The helical transmembrane segment at Trp16–Trp34 threads the bilayer. Over Phe35 to Met40 the chain is Mitochondrial intermembrane. A helical transmembrane segment spans residues Thr41–Thr66. The Mitochondrial matrix portion of the chain corresponds to Phe67–Thr72. The helical transmembrane segment at Pro73 to Ser105 threads the bilayer. Over Leu106 to Glu128 the chain is Mitochondrial intermembrane. Residues Val129 to Met152 traverse the membrane as a helical segment. The Mitochondrial matrix segment spans residues Glu153 to Glu155. A helical transmembrane segment spans residues Arg156–Glu183. At Ala184–Asp190 the chain is on the mitochondrial intermembrane side. Residues Gly191–Val223 form a helical membrane-spanning segment. Topologically, residues Leu224–His232 are mitochondrial matrix. The chain crosses the membrane as a helical span at residues Phe233 to Ile256. The Mitochondrial intermembrane segment spans residues Tyr257 to Ser261.

This sequence belongs to the cytochrome c oxidase subunit 3 family. As to quaternary structure, component of the cytochrome c oxidase (complex IV, CIV), a multisubunit enzyme composed of 14 subunits. The complex is composed of a catalytic core of 3 subunits MT-CO1, MT-CO2 and MT-CO3, encoded in the mitochondrial DNA, and 11 supernumerary subunits COX4I, COX5A, COX5B, COX6A, COX6B, COX6C, COX7A, COX7B, COX7C, COX8 and NDUFA4, which are encoded in the nuclear genome. The complex exists as a monomer or a dimer and forms supercomplexes (SCs) in the inner mitochondrial membrane with NADH-ubiquinone oxidoreductase (complex I, CI) and ubiquinol-cytochrome c oxidoreductase (cytochrome b-c1 complex, complex III, CIII), resulting in different assemblies (supercomplex SCI(1)III(2)IV(1) and megacomplex MCI(2)III(2)IV(2)).

It localises to the mitochondrion inner membrane. The enzyme catalyses 4 Fe(II)-[cytochrome c] + O2 + 8 H(+)(in) = 4 Fe(III)-[cytochrome c] + 2 H2O + 4 H(+)(out). In terms of biological role, component of the cytochrome c oxidase, the last enzyme in the mitochondrial electron transport chain which drives oxidative phosphorylation. The respiratory chain contains 3 multisubunit complexes succinate dehydrogenase (complex II, CII), ubiquinol-cytochrome c oxidoreductase (cytochrome b-c1 complex, complex III, CIII) and cytochrome c oxidase (complex IV, CIV), that cooperate to transfer electrons derived from NADH and succinate to molecular oxygen, creating an electrochemical gradient over the inner membrane that drives transmembrane transport and the ATP synthase. Cytochrome c oxidase is the component of the respiratory chain that catalyzes the reduction of oxygen to water. Electrons originating from reduced cytochrome c in the intermembrane space (IMS) are transferred via the dinuclear copper A center (CU(A)) of subunit 2 and heme A of subunit 1 to the active site in subunit 1, a binuclear center (BNC) formed by heme A3 and copper B (CU(B)). The BNC reduces molecular oxygen to 2 water molecules using 4 electrons from cytochrome c in the IMS and 4 protons from the mitochondrial matrix. The chain is Cytochrome c oxidase subunit 3 (mt-co3) from Danio rerio (Zebrafish).